A 99-amino-acid polypeptide reads, in one-letter code: Aspartyl/glutamyl-tRNA(Asn/Gln) amidotransferase subunit C (99 aa).

This sequence belongs to the GatC family. Heterotrimer of A, B and C subunits.

The catalysed reaction is L-glutamyl-tRNA(Gln) + L-glutamine + ATP + H2O = L-glutaminyl-tRNA(Gln) + L-glutamate + ADP + phosphate + H(+). It catalyses the reaction L-aspartyl-tRNA(Asn) + L-glutamine + ATP + H2O = L-asparaginyl-tRNA(Asn) + L-glutamate + ADP + phosphate + 2 H(+). Functionally, allows the formation of correctly charged Asn-tRNA(Asn) or Gln-tRNA(Gln) through the transamidation of misacylated Asp-tRNA(Asn) or Glu-tRNA(Gln) in organisms which lack either or both of asparaginyl-tRNA or glutaminyl-tRNA synthetases. The reaction takes place in the presence of glutamine and ATP through an activated phospho-Asp-tRNA(Asn) or phospho-Glu-tRNA(Gln). The sequence is that of Aspartyl/glutamyl-tRNA(Asn/Gln) amidotransferase subunit C from Corynebacterium efficiens (strain DSM 44549 / YS-314 / AJ 12310 / JCM 11189 / NBRC 100395).